A 122-amino-acid chain; its full sequence is Large ribosomal subunit protein uL14 (122 aa).

This sequence belongs to the universal ribosomal protein uL14 family. In terms of assembly, part of the 50S ribosomal subunit. Forms a cluster with proteins L3 and L19. In the 70S ribosome, L14 and L19 interact and together make contacts with the 16S rRNA in bridges B5 and B8.

Binds to 23S rRNA. Forms part of two intersubunit bridges in the 70S ribosome. The protein is Large ribosomal subunit protein uL14 of Campylobacter lari (strain RM2100 / D67 / ATCC BAA-1060).